We begin with the raw amino-acid sequence, 619 residues long: Dihydroxy-acid dehydratase (619 aa).

Asp81 lines the Mg(2+) pocket. Cys122 is a [2Fe-2S] cluster binding site. Residues Asp123 and Lys124 each contribute to the Mg(2+) site. Lys124 is modified (N6-carboxylysine). Cys195 serves as a coordination point for [2Fe-2S] cluster. A Mg(2+)-binding site is contributed by Glu494. Ser520 serves as the catalytic Proton acceptor.

The protein belongs to the IlvD/Edd family. Homodimer. [2Fe-2S] cluster is required as a cofactor. It depends on Mg(2+) as a cofactor.

It carries out the reaction (2R)-2,3-dihydroxy-3-methylbutanoate = 3-methyl-2-oxobutanoate + H2O. It catalyses the reaction (2R,3R)-2,3-dihydroxy-3-methylpentanoate = (S)-3-methyl-2-oxopentanoate + H2O. The protein operates within amino-acid biosynthesis; L-isoleucine biosynthesis; L-isoleucine from 2-oxobutanoate: step 3/4. It functions in the pathway amino-acid biosynthesis; L-valine biosynthesis; L-valine from pyruvate: step 3/4. Its function is as follows. Functions in the biosynthesis of branched-chain amino acids. Catalyzes the dehydration of (2R,3R)-2,3-dihydroxy-3-methylpentanoate (2,3-dihydroxy-3-methylvalerate) into 2-oxo-3-methylpentanoate (2-oxo-3-methylvalerate) and of (2R)-2,3-dihydroxy-3-methylbutanoate (2,3-dihydroxyisovalerate) into 2-oxo-3-methylbutanoate (2-oxoisovalerate), the penultimate precursor to L-isoleucine and L-valine, respectively. This is Dihydroxy-acid dehydratase from Shewanella sp. (strain ANA-3).